Reading from the N-terminus, the 88-residue chain is Small ribosomal subunit protein bS16 (88 aa).

It belongs to the bacterial ribosomal protein bS16 family.

The sequence is that of Small ribosomal subunit protein bS16 from Leptospira borgpetersenii serovar Hardjo-bovis (strain L550).